The following is a 125-amino-acid chain: Large ribosomal subunit protein bL12 (125 aa).

Belongs to the bacterial ribosomal protein bL12 family. As to quaternary structure, homodimer. Part of the ribosomal stalk of the 50S ribosomal subunit. Forms a multimeric L10(L12)X complex, where L10 forms an elongated spine to which 2 to 4 L12 dimers bind in a sequential fashion. Binds GTP-bound translation factors.

Functionally, forms part of the ribosomal stalk which helps the ribosome interact with GTP-bound translation factors. Is thus essential for accurate translation. The chain is Large ribosomal subunit protein bL12 from Paraburkholderia phymatum (strain DSM 17167 / CIP 108236 / LMG 21445 / STM815) (Burkholderia phymatum).